The primary structure comprises 74 residues: Protein A30 homolog (74 aa).

Belongs to the chordopoxvirinae A30 family. In terms of assembly, interacts with protein G7; the interaction stabilizes both proteins. Phosphorylated by viral F10 kinase.

Functionally, required for the association between the dense viroplasm and the viral membranes to form the mature virion (MV). The polypeptide is Protein A30 homolog (Fowlpox virus (strain NVSL) (FPV)).